A 369-amino-acid polypeptide reads, in one-letter code: Flagellar P-ring protein (369 aa).

A signal peptide spans 1–22 (MFNARRLIAATLLMSCAFGAHA).

Belongs to the FlgI family. The basal body constitutes a major portion of the flagellar organelle and consists of four rings (L,P,S, and M) mounted on a central rod.

The protein localises to the periplasm. It localises to the bacterial flagellum basal body. Assembles around the rod to form the L-ring and probably protects the motor/basal body from shearing forces during rotation. The protein is Flagellar P-ring protein of Pseudomonas entomophila (strain L48).